A 522-amino-acid chain; its full sequence is MSEIWEDAIKSNAWPFVEAKKILDSLNGQIPEKGYVLFETGYGPSGLPHIGTFGENARMVMVQKAFEQLSDIPTKLICFSDDMDGLRTVPSNIPNPEMVAQYMDMPLTSIPDTFGECESYGHYMNAKLRSFLDKFGFEYAFYSSTNCYKAGMFDEMLIMVLEKYDEIMELMLPTFREERKATYSPFMPICPKTGKVLQVPIEKWDAKAGTVTYKDKAGNYIEVPVTGGHCKLQWKPDFGMRWAALKVDYEMYGKDHLANARLYSEICRILGGKPPVQLCYELFLDENGEKISKSKGNSISIDDWLKYAPVESMALFMYQNPTRAKRLFFDVIPKNVDEYITFNQKYHLEEDRAKRFANPVYHIHHGNVPKIETFGITYSLLLNLTSVCNPSDKSVLWGFISKYEPNATPNTNPYLDHLAEFAIRYYNDFIKAHKSYLSPSEKHKVILQDILDMLSDIADQTEAEAIQKAIYDIGMKAGYENLRDYFKDLYQILLGQNEGPRLGTFIKLYGVQEMKKLVEGQL.

A 'HIGH' region motif is present at residues 44–52 (PSGLPHIGT). The short motif at 290 to 294 (KISKS) is the 'KMSKS' region element. K293 is a binding site for ATP.

The protein belongs to the class-I aminoacyl-tRNA synthetase family.

It is found in the cytoplasm. It carries out the reaction tRNA(Lys) + L-lysine + ATP = L-lysyl-tRNA(Lys) + AMP + diphosphate. In Rickettsia peacockii (strain Rustic), this protein is Lysine--tRNA ligase.